We begin with the raw amino-acid sequence, 635 residues long: Protein NSP-INTERACTING KINASE 2 (635 aa).

Positions 1–32 (MLQGRREAKKSYALFSSTFFFFFICFLSSSSA) are cleaved as a signal peptide. Topologically, residues 33-248 (ELTDKGVNFE…DGGTKNRKIA (216 aa)) are extracellular. 2 N-linked (GlcNAc...) asparagine glycosylation sites follow: Asn92 and Asn103. LRR repeat units follow at residues 104–128 (LTNL…IGKL), 129–153 (MKLK…SYSK), 155–176 (LQYL…LANM), and 177–200 (TQLT…LAKT). N-linked (GlcNAc...) asparagine glycans are attached at residues Asn140, Asn162, Asn175, Asn188, Asn219, Asn231, and Asn235. Residues 214 to 242 (TEKDCNGTQPKPMSITLNSSQNKSSDGGT) are disordered. Positions 219 to 241 (NGTQPKPMSITLNSSQNKSSDGG) are enriched in polar residues. The helical transmembrane segment at 249-269 (VVFGVSLTCVCLLIIGFGFLL) threads the bilayer. Residues 270–635 (WWRRRHNKQV…VQAMELSGPR (366 aa)) lie on the Cytoplasmic side of the membrane. A Phosphothreonine modification is found at Thr309. The region spanning 312–591 (FSSKNLVGKG…EGDGLVEKWE (280 aa)) is the Protein kinase domain. ATP-binding positions include 318–326 (VGKGGFGNV) and Lys340. Residues Ser393 and Ser396 each carry the phosphoserine modification. Phosphothreonine is present on Thr408. The segment at 422–502 (YLHEQCDPKI…DVFGFGILLL (81 aa)) is interaction with geminivirus NSP protein. Catalysis depends on Asp435, which acts as the Proton acceptor. Residues Thr468, Thr469, and Thr474 each carry the phosphothreonine modification. Position 482 is a phosphotyrosine (Tyr482). Ser484 bears the Phosphoserine mark. Thr485 carries the phosphothreonine modification. Phosphoserine is present on Ser489. Position 564 is a phosphothreonine (Thr564). Polar residues predominate over residues 593-613 (SSQRAETNRSYSKPNEFSSSE). Positions 593 to 621 (SSQRAETNRSYSKPNEFSSSERYSDLTDD) are disordered.

It belongs to the protein kinase superfamily. Ser/Thr protein kinase family. In terms of assembly, oligomer. Interacts with geminivirus nuclear shuttle protein (NSP). In terms of processing, autophosphorylated. Expressed in flowers and roots.

It is found in the cell membrane. It catalyses the reaction L-seryl-[protein] + ATP = O-phospho-L-seryl-[protein] + ADP + H(+). The enzyme catalyses L-threonyl-[protein] + ATP = O-phospho-L-threonyl-[protein] + ADP + H(+). Its activity is regulated as follows. Inhibited by the viral nuclear shuttle protein (NSP) that binds to the region required for oligomerization. Involved in defense response to geminivirus infection. Phosphorylates RPL10A in vitro. The polypeptide is Protein NSP-INTERACTING KINASE 2 (NIK2) (Arabidopsis thaliana (Mouse-ear cress)).